The sequence spans 386 residues: DNA methyltransferase CcrM (386 aa).

The region spanning 280–382 (LGKAELTVMT…LRKIIREQMA (103 aa)) is the RAMA domain.

Belongs to the N(4)/N(6)-methyltransferase family.

The catalysed reaction is a 2'-deoxyadenosine in DNA + S-adenosyl-L-methionine = an N(6)-methyl-2'-deoxyadenosine in DNA + S-adenosyl-L-homocysteine + H(+). In terms of biological role, a beta subtype methylase that recognizes the double-stranded sequence 5'-GANTC-3' and methylates A-2 on both strands. CcrM-mediated methylation has important cellular functions. Contributes to the accurate cell-cycle control of DNA replication and cellular morphology. This Brucella abortus (strain S19) protein is DNA methyltransferase CcrM (ccrM).